Reading from the N-terminus, the 122-residue chain is Double-headed protease inhibitor, submandibular gland (122 aa).

2 Kazal-like domains span residues 10-70 and 71-121; these read GGRK…ECDI and ECTQ…QCQS. 6 cysteine pairs are disulfide-bonded: Cys16-Cys50, Cys28-Cys47, Cys36-Cys68, Cys72-Cys101, Cys79-Cys98, and Cys87-Cys119.

The protein resides in the secreted. In terms of biological role, this inhibitor is composed of two homologous actively inhibiting halves: one which inhibits trypsin, the other which inhibits elastase. In Martes martes (European pine marten), this protein is Double-headed protease inhibitor, submandibular gland.